A 156-amino-acid chain; its full sequence is Ribosomal RNA large subunit methyltransferase H (156 aa).

S-adenosyl-L-methionine is bound by residues Leu-73, Gly-104, and Leu-123–Leu-128.

It belongs to the RNA methyltransferase RlmH family. Homodimer.

It localises to the cytoplasm. The catalysed reaction is pseudouridine(1915) in 23S rRNA + S-adenosyl-L-methionine = N(3)-methylpseudouridine(1915) in 23S rRNA + S-adenosyl-L-homocysteine + H(+). Specifically methylates the pseudouridine at position 1915 (m3Psi1915) in 23S rRNA. The sequence is that of Ribosomal RNA large subunit methyltransferase H from Ralstonia pickettii (strain 12J).